Consider the following 695-residue polypeptide: Polyribonucleotide nucleotidyltransferase (695 aa).

Mg(2+) contacts are provided by D488 and D494. In terms of domain architecture, KH spans 554-613; the sequence is PKTTIIKIKTDKIRDLIGRGGETIKGIISTSCASIDVDDSGNVNIFSNNQKSFDTAVQMV. The S1 motif domain occupies 623-690; that stretch reads NKVYTGKVVK…DRGRIKLSRK (68 aa).

Belongs to the polyribonucleotide nucleotidyltransferase family. As to quaternary structure, component of the RNA degradosome, which is a multiprotein complex involved in RNA processing and mRNA degradation. It depends on Mg(2+) as a cofactor.

It localises to the cytoplasm. It catalyses the reaction RNA(n+1) + phosphate = RNA(n) + a ribonucleoside 5'-diphosphate. Its function is as follows. Involved in mRNA degradation. Catalyzes the phosphorolysis of single-stranded polyribonucleotides processively in the 3'- to 5'-direction. In Vesicomyosocius okutanii subsp. Calyptogena okutanii (strain HA), this protein is Polyribonucleotide nucleotidyltransferase.